A 140-amino-acid chain; its full sequence is Neuropeptide CCHamide-2 (140 aa).

Residues 1 to 22 (MAQMYLAVTIIALLAISHGVSA) form the signal peptide. The cysteines at positions 26 and 33 are disulfide-linked. H37 is modified (histidine amide). A propeptide spanning residues 41-140 (SGDTSAMDQL…PDDGYYIESL (100 aa)) is cleaved from the precursor.

Expressed in corpora cardiaca (CC), corpora allata (CA), antennal lobe (AL) and gnathal ganglion (GNG) (at protein level). Expression detected in few animals (at protein level).

It is found in the secreted. Functionally, ligand for the CCHamide-2 receptor CCHa2-R. The sequence is that of Neuropeptide CCHamide-2 from Agrotis ipsilon (Black cutworm moth).